The chain runs to 413 residues: Peptide chain release factor 1, mitochondrial (413 aa).

A mitochondrion-targeting transit peptide spans Met-1–Tyr-40. Gln-287 is modified (N5-methylglutamine).

The protein belongs to the prokaryotic/mitochondrial release factor family. Post-translationally, methylation increases the termination efficiency of RF1. Mostly expressed in seedlings, stems and adult plants, and, to a lower extent, in siliques. Barely detected in etiolated seedlings and roots.

The protein localises to the mitochondrion. In terms of biological role, peptide chain release factor 1 directs the termination of translation in response to the peptide chain termination codons UAG and UAA in mitochondria. The chain is Peptide chain release factor 1, mitochondrial from Arabidopsis thaliana (Mouse-ear cress).